The sequence spans 428 residues: Enolase (428 aa).

Gln167 provides a ligand contact to (2R)-2-phosphoglycerate. Glu209 acts as the Proton donor in catalysis. Residues Asp246, Glu288, and Asp315 each coordinate Mg(2+). Residues Lys340, Arg369, Ser370, and Lys391 each contribute to the (2R)-2-phosphoglycerate site. Residue Lys340 is the Proton acceptor of the active site.

It belongs to the enolase family. Component of the RNA degradosome, a multiprotein complex involved in RNA processing and mRNA degradation. Mg(2+) is required as a cofactor.

The protein resides in the cytoplasm. It is found in the secreted. The protein localises to the cell surface. It catalyses the reaction (2R)-2-phosphoglycerate = phosphoenolpyruvate + H2O. The protein operates within carbohydrate degradation; glycolysis; pyruvate from D-glyceraldehyde 3-phosphate: step 4/5. In terms of biological role, catalyzes the reversible conversion of 2-phosphoglycerate (2-PG) into phosphoenolpyruvate (PEP). It is essential for the degradation of carbohydrates via glycolysis. The chain is Enolase from Pseudomonas savastanoi pv. phaseolicola (strain 1448A / Race 6) (Pseudomonas syringae pv. phaseolicola (strain 1448A / Race 6)).